The chain runs to 497 residues: Lysine--tRNA ligase (497 aa).

Mg(2+)-binding residues include E405 and E412.

It belongs to the class-II aminoacyl-tRNA synthetase family. As to quaternary structure, homodimer. It depends on Mg(2+) as a cofactor.

It is found in the cytoplasm. It catalyses the reaction tRNA(Lys) + L-lysine + ATP = L-lysyl-tRNA(Lys) + AMP + diphosphate. The sequence is that of Lysine--tRNA ligase from Gloeobacter violaceus (strain ATCC 29082 / PCC 7421).